A 388-amino-acid chain; its full sequence is S-adenosylmethionine synthase (388 aa).

His-17 lines the ATP pocket. Residue Asp-19 participates in Mg(2+) binding. Glu-45 is a binding site for K(+). L-methionine-binding residues include Glu-58 and Gln-106. The segment at 106–116 (QSAHIAQGVDK) is flexible loop. Residues 166–168 (DAK), Asp-241, 247–248 (RK), Ala-264, and Lys-268 each bind ATP. L-methionine is bound at residue Asp-241. Lys-272 is an L-methionine binding site.

The protein belongs to the AdoMet synthase family. In terms of assembly, homotetramer; dimer of dimers. Mg(2+) is required as a cofactor. The cofactor is K(+).

Its subcellular location is the cytoplasm. The catalysed reaction is L-methionine + ATP + H2O = S-adenosyl-L-methionine + phosphate + diphosphate. The protein operates within amino-acid biosynthesis; S-adenosyl-L-methionine biosynthesis; S-adenosyl-L-methionine from L-methionine: step 1/1. In terms of biological role, catalyzes the formation of S-adenosylmethionine (AdoMet) from methionine and ATP. The overall synthetic reaction is composed of two sequential steps, AdoMet formation and the subsequent tripolyphosphate hydrolysis which occurs prior to release of AdoMet from the enzyme. This Cereibacter sphaeroides (strain ATCC 17023 / DSM 158 / JCM 6121 / CCUG 31486 / LMG 2827 / NBRC 12203 / NCIMB 8253 / ATH 2.4.1.) (Rhodobacter sphaeroides) protein is S-adenosylmethionine synthase.